A 38-amino-acid chain; its full sequence is Photosystem II reaction center protein L (38 aa).

Residues Ser-17–Phe-37 form a helical membrane-spanning segment.

It belongs to the PsbL family. As to quaternary structure, PSII is composed of 1 copy each of membrane proteins PsbA, PsbB, PsbC, PsbD, PsbE, PsbF, PsbH, PsbI, PsbJ, PsbK, PsbL, PsbM, PsbT, PsbX, PsbY, PsbZ, Psb30/Ycf12, at least 3 peripheral proteins of the oxygen-evolving complex and a large number of cofactors. It forms dimeric complexes.

It localises to the plastid. The protein resides in the chloroplast thylakoid membrane. In terms of biological role, one of the components of the core complex of photosystem II (PSII). PSII is a light-driven water:plastoquinone oxidoreductase that uses light energy to abstract electrons from H(2)O, generating O(2) and a proton gradient subsequently used for ATP formation. It consists of a core antenna complex that captures photons, and an electron transfer chain that converts photonic excitation into a charge separation. This subunit is found at the monomer-monomer interface and is required for correct PSII assembly and/or dimerization. In Tupiella akineta (Green alga), this protein is Photosystem II reaction center protein L.